A 309-amino-acid chain; its full sequence is Zinc finger protein-like 1 homolog (309 aa).

A B box-type; degenerate zinc finger spans residues 1 to 43 (MGLCKCPKRKVTNLFCYEHRVNVCEFCLVDNHPNCVVQSYLTW). The segment at 53–101 (CSLCKTTLAEGDTIRLNCLHLLHWKCFDEWAANFPATTAPAGYRCPCCS) adopts an RING-type; atypical zinc-finger fold. A disordered region spans residues 200 to 221 (GAESSSDTRPLLQLRDADNEEN). Residues 254–274 (KIALFVIFLAVLALITIIMVM) form a helical membrane-spanning segment.

The protein belongs to the ZFPL1 family.

It localises to the membrane. This chain is Zinc finger protein-like 1 homolog, found in Caenorhabditis elegans.